Reading from the N-terminus, the 420-residue chain is Dachshund homolog dac-1 (420 aa).

The segment at 23-77 (PSSSSSSSNNSSSNTSSSNFLSPYEYQESSTSPRDTTDSSGESSLSSSGSSSSLN) is disordered. Low complexity-rich tracts occupy residues 24–41 (SSSS…SSSN) and 51–77 (SSTS…SSLN). The DACHbox-N stretch occupies residues 85–171 (KLIKFRGHNV…LLKTSDFEKL (87 aa)). Over residues 242-258 (NSFERADDDDQNQRDAD) the composition is skewed to basic and acidic residues. The segment at 242–321 (NSFERADDDD…SSSSSGKNDE (80 aa)) is disordered. The segment covering 263–273 (LNLSKSGGNSE) has biased composition (polar residues). The span at 297–317 (GGSNSNSLSMSMEAGSSSSSG) shows a compositional bias: low complexity.

Belongs to the DACH/dachshund family. In terms of tissue distribution, expressed in AFD, AWC, ASE and ASK neurons. Expressed in the alae.

Its subcellular location is the nucleus. Functionally, transcription factor. Plays a role in the thermotactic response. The sequence is that of Dachshund homolog dac-1 from Caenorhabditis elegans.